The following is a 303-amino-acid chain: UDP-3-O-acyl-N-acetylglucosamine deacetylase (303 aa).

Residues His78, His237, and Asp241 each contribute to the Zn(2+) site. Residue His264 is the Proton donor of the active site.

This sequence belongs to the LpxC family. Zn(2+) is required as a cofactor.

It carries out the reaction a UDP-3-O-[(3R)-3-hydroxyacyl]-N-acetyl-alpha-D-glucosamine + H2O = a UDP-3-O-[(3R)-3-hydroxyacyl]-alpha-D-glucosamine + acetate. It functions in the pathway glycolipid biosynthesis; lipid IV(A) biosynthesis; lipid IV(A) from (3R)-3-hydroxytetradecanoyl-[acyl-carrier-protein] and UDP-N-acetyl-alpha-D-glucosamine: step 2/6. In terms of biological role, catalyzes the hydrolysis of UDP-3-O-myristoyl-N-acetylglucosamine to form UDP-3-O-myristoylglucosamine and acetate, the committed step in lipid A biosynthesis. The protein is UDP-3-O-acyl-N-acetylglucosamine deacetylase of Teredinibacter turnerae (strain ATCC 39867 / T7901).